Here is a 183-residue protein sequence, read N- to C-terminus: Transmembrane protein 52B (183 aa).

The first 24 residues, 1-24, serve as a signal peptide directing secretion; it reads MGVRVHVVAASALLYFILLSGTRC. Residues 40–60 form a helical membrane-spanning segment; sequence VHLWYIWLLVVIGALLLLCGL. The interval 158–183 is disordered; it reads DLPPVPEEKQLPPTEKESTRIVDSWN. The span at 163–177 shows a compositional bias: basic and acidic residues; sequence PEEKQLPPTEKESTR.

It is found in the membrane. This chain is Transmembrane protein 52B (TMEM52B), found in Homo sapiens (Human).